The following is a 145-amino-acid chain: UPF0735 ACT domain-containing protein CPE1414 (145 aa).

One can recognise an ACT domain in the interval 69–144 (IFNMVVTHEK…GVEKVEFVAM (76 aa)).

Belongs to the UPF0735 family.

The chain is UPF0735 ACT domain-containing protein CPE1414 from Clostridium perfringens (strain 13 / Type A).